The chain runs to 414 residues: Dihydroorotase (414 aa).

Zn(2+) is bound by residues His57 and His59. Residues 59–61 and Asn91 contribute to the substrate site; that span reads HLR. Positions 135, 164, 204, and 272 each coordinate Zn(2+). Position 135 is an N6-carboxylysine (Lys135). Asp272 is a catalytic residue. Substrate contacts are provided by residues His276 and 286-287; that span reads AG.

Belongs to the metallo-dependent hydrolases superfamily. DHOase family. Class I DHOase subfamily. Requires Zn(2+) as cofactor.

The enzyme catalyses (S)-dihydroorotate + H2O = N-carbamoyl-L-aspartate + H(+). Its pathway is pyrimidine metabolism; UMP biosynthesis via de novo pathway; (S)-dihydroorotate from bicarbonate: step 3/3. Functionally, catalyzes the reversible cyclization of carbamoyl aspartate to dihydroorotate. This Pyrococcus furiosus (strain ATCC 43587 / DSM 3638 / JCM 8422 / Vc1) protein is Dihydroorotase.